A 358-amino-acid polypeptide reads, in one-letter code: Trans-anol O-methyltransferase 1 (358 aa).

S-adenosyl-L-methionine is bound by residues Gly201, Asp224, Asp244, Met245, and Arg259. The Proton acceptor role is filled by His262.

It belongs to the class I-like SAM-binding methyltransferase superfamily. Cation-independent O-methyltransferase family. COMT subfamily. Highly expressed in developing fruits. Expressed at low levels in roots, young leaves, buds and flowers.

The enzyme catalyses (E)-anol + S-adenosyl-L-methionine = (E)-anethole + S-adenosyl-L-homocysteine + H(+). It catalyses the reaction (E)-isoeugenol + S-adenosyl-L-methionine = (E)-isomethyleugenol + S-adenosyl-L-homocysteine + H(+). Its pathway is aromatic compound metabolism; phenylpropanoid biosynthesis. With respect to regulation, inhibited by zinc and copper. In terms of biological role, phenylpropene O-methyltransferase that catalyzes the conversion of trans-anol to trans-anethole and isoeugenol to isomethyleugenol. Phenylpropenes are the primary constituents of various essential plant oils. They are produced as antimicrobial and antianimal compounds, or as floral attractants of pollinators. The polypeptide is Trans-anol O-methyltransferase 1 (AIMT1) (Pimpinella anisum (Anise)).